Consider the following 182-residue polypeptide: Putative manganese efflux pump MntP 2 (182 aa).

A run of 6 helical transmembrane segments spans residues 2 to 22, 37 to 57, 63 to 83, 104 to 123, 127 to 149, and 162 to 182; these read IELT…SIAL, AGGF…YLGV, IGGI…LKMI, LLLL…LTLT, LPLW…GGVH, and AEYL…IEHS.

The protein belongs to the MntP (TC 9.B.29) family.

The protein localises to the cell inner membrane. In terms of biological role, probably functions as a manganese efflux pump. The sequence is that of Putative manganese efflux pump MntP 2 from Wolinella succinogenes (strain ATCC 29543 / DSM 1740 / CCUG 13145 / JCM 31913 / LMG 7466 / NCTC 11488 / FDC 602W) (Vibrio succinogenes).